We begin with the raw amino-acid sequence, 360 residues long: Decorin (360 aa).

The first 16 residues, 1-16 (MTATLILLLLAQVSWA), serve as a signal peptide directing secretion. Residues 17–30 (GPFQQRGLFDFMLE) constitute a propeptide that is removed on maturation. Serine 34 carries O-linked (Xyl...) (glycosaminoglycan) serine glycosylation. Cystine bridges form between cysteine 55–cysteine 61 and cysteine 59–cysteine 68. LRR repeat units lie at residues 74–94 (DKVP…NNKI), 95–118 (TEIK…NNKI), 119–142 (SKIS…KNHL), 143–163 (KELP…ENEI), 164–187 (TKVR…TNPL), 188–213 (KSSG…DTNI), 214–234 (TTIP…GNKI), 235–258 (TKID…FNDI), 259–282 (SAVD…NNKL), 283–305 (IRVP…NNNI), 306–335 (SVVG…SNPV), and 336–360 (QYWE…GNYK). The N-linked (GlcNAc...) asparagine glycan is linked to asparagine 212. N-linked (GlcNAc...) asparagine glycosylation is found at asparagine 263 and asparagine 304. Residues cysteine 314 and cysteine 347 are joined by a disulfide bond.

Belongs to the small leucine-rich proteoglycan (SLRP) family. SLRP class I subfamily. As to quaternary structure, binds to type I and type II collagen, fibronectin and TGF-beta. Forms a ternary complex with MFAP2 and ELN. Interacts with DPT. The attached glycosaminoglycan chain can be either chondroitin sulfate or dermatan sulfate depending upon the tissue of origin.

Its subcellular location is the secreted. The protein resides in the extracellular space. It is found in the extracellular matrix. May affect the rate of fibrils formation. The sequence is that of Decorin (DCN) from Oryctolagus cuniculus (Rabbit).